We begin with the raw amino-acid sequence, 185 residues long: ATP synthase subunit delta (185 aa).

Belongs to the ATPase delta chain family. F-type ATPases have 2 components, F(1) - the catalytic core - and F(0) - the membrane proton channel. F(1) has five subunits: alpha(3), beta(3), gamma(1), delta(1), epsilon(1). CF(0) has four main subunits: a(1), b(2) and c(10-14). The alpha and beta chains form an alternating ring which encloses part of the gamma chain. F(1) is attached to F(0) by a central stalk formed by the gamma and epsilon chains, while a peripheral stalk is formed by the delta and b chains.

It localises to the cell membrane. F(1)F(0) ATP synthase produces ATP from ADP in the presence of a proton or sodium gradient. F-type ATPases consist of two structural domains, F(1) containing the extramembraneous catalytic core and F(0) containing the membrane proton channel, linked together by a central stalk and a peripheral stalk. During catalysis, ATP synthesis in the catalytic domain of F(1) is coupled via a rotary mechanism of the central stalk subunits to proton translocation. Functionally, this protein is part of the stalk that links CF(0) to CF(1). It either transmits conformational changes from CF(0) to CF(1) or is implicated in proton conduction. The chain is ATP synthase subunit delta from Heliobacterium modesticaldum (strain ATCC 51547 / Ice1).